Here is a 239-residue protein sequence, read N- to C-terminus: tRNA (guanine-N(7)-)-methyltransferase (239 aa).

4 residues coordinate S-adenosyl-L-methionine: Glu-69, Glu-94, Asp-121, and Asp-144. The active site involves Asp-144. Residue Lys-148 coordinates substrate. The interval 150 to 155 (RHNKRR) is interaction with RNA. Residues Asp-180 and 217–220 (TKFE) each bind substrate.

This sequence belongs to the class I-like SAM-binding methyltransferase superfamily. TrmB family. Monomer.

The catalysed reaction is guanosine(46) in tRNA + S-adenosyl-L-methionine = N(7)-methylguanosine(46) in tRNA + S-adenosyl-L-homocysteine. It participates in tRNA modification; N(7)-methylguanine-tRNA biosynthesis. Its function is as follows. Catalyzes the formation of N(7)-methylguanine at position 46 (m7G46) in tRNA. The protein is tRNA (guanine-N(7)-)-methyltransferase of Cronobacter sakazakii (strain ATCC BAA-894) (Enterobacter sakazakii).